Reading from the N-terminus, the 118-residue chain is Small ribosomal subunit protein uS13 (118 aa).

Residues 94-118 form a disordered region; that stretch reads SLPLRGQRTKTNARTRKGPRKPIKK.

It belongs to the universal ribosomal protein uS13 family. As to quaternary structure, part of the 30S ribosomal subunit. Forms a loose heterodimer with protein S19. Forms two bridges to the 50S subunit in the 70S ribosome.

In terms of biological role, located at the top of the head of the 30S subunit, it contacts several helices of the 16S rRNA. In the 70S ribosome it contacts the 23S rRNA (bridge B1a) and protein L5 of the 50S subunit (bridge B1b), connecting the 2 subunits; these bridges are implicated in subunit movement. Contacts the tRNAs in the A and P-sites. In Aliivibrio fischeri (strain ATCC 700601 / ES114) (Vibrio fischeri), this protein is Small ribosomal subunit protein uS13.